Reading from the N-terminus, the 788-residue chain is Phenylalanine--tRNA ligase beta subunit (788 aa).

Residues 39–147 (FNVSGEIITA…DPVELGVNVV (109 aa)) form the tRNA-binding domain. The 74-residue stretch at 399–472 (IEPKKVMLRK…RIYGYEKVES (74 aa)) folds into the B5 domain. Mg(2+)-binding residues include Asp450, Asp456, Glu459, and Glu460. The FDX-ACB domain maps to 694 to 787 (PRFPAVRRDI…AEREFGIRRR (94 aa)).

The protein belongs to the phenylalanyl-tRNA synthetase beta subunit family. Type 1 subfamily. Tetramer of two alpha and two beta subunits. Mg(2+) is required as a cofactor.

It is found in the cytoplasm. It catalyses the reaction tRNA(Phe) + L-phenylalanine + ATP = L-phenylalanyl-tRNA(Phe) + AMP + diphosphate + H(+). In Thermotoga maritima (strain ATCC 43589 / DSM 3109 / JCM 10099 / NBRC 100826 / MSB8), this protein is Phenylalanine--tRNA ligase beta subunit (pheT).